The chain runs to 71 residues: DNA-directed RNA polymerase subunit omega (71 aa).

Belongs to the RNA polymerase subunit omega family. As to quaternary structure, the RNAP catalytic core consists of 2 alpha, 1 beta, 1 beta' and 1 omega subunit. When a sigma factor is associated with the core the holoenzyme is formed, which can initiate transcription.

It catalyses the reaction RNA(n) + a ribonucleoside 5'-triphosphate = RNA(n+1) + diphosphate. Functionally, promotes RNA polymerase assembly. Latches the N- and C-terminal regions of the beta' subunit thereby facilitating its interaction with the beta and alpha subunits. The protein is DNA-directed RNA polymerase subunit omega of Syntrophomonas wolfei subsp. wolfei (strain DSM 2245B / Goettingen).